A 226-amino-acid chain; its full sequence is Cold-regulated 413 inner membrane protein 2, chloroplastic (226 aa).

The transit peptide at 1-76 (MASLCLSSSR…RKRGSSVVCY (76 aa)) directs the protein to the chloroplast. Residues 77-79 (ATP) lie on the Stromal side of the membrane. A helical membrane pass occupies residues 80 to 100 (MLSVHNLQWISTISCVALMFA). At 101–103 (RGT) the chain is on the chloroplast intermembrane side. A helical membrane pass occupies residues 104-124 (GIHKSFVVPLFALQAPMGIVS). The Stromal portion of the chain corresponds to 125–129 (WMKGE). A helical transmembrane segment spans residues 130-150 (YGIWAAFLALLTRLFFSFPVE). At 151–152 (LE) the chain is on the chloroplast intermembrane side. The chain crosses the membrane as a helical span at residues 153–173 (LPFIALLLVIVAPYQVMSIRG). The Stromal portion of the chain corresponds to 174-176 (KQE). A helical transmembrane segment spans residues 177-197 (GAILSLAISCFLAFQHFSRAG). Topologically, residues 198–205 (TLQKAFDQ) are chloroplast intermembrane. The helical transmembrane segment at 206–226 (NSVLATVAIIGVTVVSFLFLI) threads the bilayer.

The protein belongs to the Cold-regulated 413 protein family.

The protein localises to the plastid. It localises to the chloroplast inner membrane. In Arabidopsis thaliana (Mouse-ear cress), this protein is Cold-regulated 413 inner membrane protein 2, chloroplastic (COR413IM2).